Consider the following 149-residue polypeptide: Large ribosomal subunit protein uL13 (149 aa).

Belongs to the universal ribosomal protein uL13 family. As to quaternary structure, part of the 50S ribosomal subunit.

Functionally, this protein is one of the early assembly proteins of the 50S ribosomal subunit, although it is not seen to bind rRNA by itself. It is important during the early stages of 50S assembly. This Gemmatimonas aurantiaca (strain DSM 14586 / JCM 11422 / NBRC 100505 / T-27) protein is Large ribosomal subunit protein uL13.